The primary structure comprises 603 residues: Myotubularin (603 aa).

Polar residues predominate over residues 1–13 (MASASTSKYNSHS). Residues 1-25 (MASASTSKYNSHSLENESIKRTSRD) form a disordered region. A phosphoserine mark is found at Ser13 and Ser18. Residues 14–25 (LENESIKRTSRD) show a composition bias toward basic and acidic residues. Residues 29-97 (RDLTEAVPRL…GVISRIEKMG (69 aa)) enclose the GRAM domain. The Myotubularin phosphatase domain maps to 163 to 538 (GWTVYNPVEE…RHLELWVNYY (376 aa)). 3 residues coordinate a 1,2-diacyl-sn-glycero-3-phospho-(1D-myo-inositol-3,5-bisphosphate): Asn288, Asn313, and Ile314. Positions 288, 313, and 314 each coordinate a 1,2-diacyl-sn-glycero-3-phospho-(1D-myo-inositol-3-phosphate). Cys375 acts as the Phosphocysteine intermediate in catalysis. Ser376, Asp377, Gly378, Trp379, Asp380, Arg381, Lys417, and Arg421 together coordinate a 1,2-diacyl-sn-glycero-3-phospho-(1D-myo-inositol-3,5-bisphosphate). A 1,2-diacyl-sn-glycero-3-phospho-(1D-myo-inositol-3-phosphate)-binding residues include Ser376, Asp377, Gly378, Trp379, Asp380, and Arg381. Arg421 contacts a 1,2-diacyl-sn-glycero-3-phospho-(1D-myo-inositol-3-phosphate). Position 495 is a phosphothreonine (Thr495). The tract at residues 579-603 (SAKLSDPPTSPSSPSQMMPHVQTHF) is disordered. The residue at position 588 (Ser588) is a Phosphoserine.

It belongs to the protein-tyrosine phosphatase family. Non-receptor class myotubularin subfamily. In terms of assembly, heterodimer with MTMR12. Interacts with KMT2A/MLL1 (via SET domain). Interacts with DES in skeletal muscle but not in cardiac muscle. Interacts with SPEG.

The protein resides in the cytoplasm. It localises to the cell membrane. Its subcellular location is the cell projection. It is found in the filopodium. The protein localises to the ruffle. The protein resides in the late endosome. It localises to the myofibril. Its subcellular location is the sarcomere. The catalysed reaction is a 1,2-diacyl-sn-glycero-3-phospho-(1D-myo-inositol-3-phosphate) + H2O = a 1,2-diacyl-sn-glycero-3-phospho-(1D-myo-inositol) + phosphate. It catalyses the reaction a 1,2-diacyl-sn-glycero-3-phospho-(1D-myo-inositol-3,5-bisphosphate) + H2O = a 1,2-diacyl-sn-glycero-3-phospho-(1D-myo-inositol-5-phosphate) + phosphate. The enzyme catalyses 1,2-dioctanoyl-sn-glycero-3-phospho-(1-D-myo-inositol-3-phosphate) + H2O = 1,2-dioctanoyl-sn-glycero-3-phospho-(1D-myo-inositol) + phosphate. It carries out the reaction 1,2-dioctanoyl-sn-glycero-3-phospho-(1D-myo-inositol-3,5-bisphosphate) + H2O = 1,2-dioctanoyl-sn-glycero-3-phospho-(1D-myo-inositol-5-phosphate) + phosphate. The catalysed reaction is 1,2-dihexadecanoyl-sn-glycero-3-phospho-(1D-myo-inositol-3,5-phosphate) + H2O = 1,2-dihexadecanoyl-sn-glycero-3-phospho-(1D-myo-inositol-5-phosphate) + phosphate. With respect to regulation, allosterically activated by phosphatidylinositol 5-phosphate (PI5P). Its function is as follows. Lipid phosphatase which dephosphorylates phosphatidylinositol 3-monophosphate (PI3P) and phosphatidylinositol 3,5-bisphosphate (PI(3,5)P2). Has also been shown to dephosphorylate phosphotyrosine- and phosphoserine-containing peptides. Negatively regulates EGFR degradation through regulation of EGFR trafficking from the late endosome to the lysosome. Plays a role in vacuolar formation and morphology. Regulates desmin intermediate filament assembly and architecture. Plays a role in mitochondrial morphology and positioning. Required for skeletal muscle maintenance but not for myogenesis. In skeletal muscles, stabilizes MTMR12 protein levels. This is Myotubularin from Homo sapiens (Human).